The following is a 607-amino-acid chain: Probable CoA ligase CCL8 (607 aa).

ATP-binding positions include T236–K244, E391–T396, D474, I486–R489, and K591. Residues S305–E391 are SBD1. The interval R392–Y453 is SBD2.

Belongs to the ATP-dependent AMP-binding enzyme family. In terms of tissue distribution, mostly expressed at low levels in glandular trichomes (lupulin glands) after flowering, and, to a lower extent, in stems, leaves, flowers and cones.

The protein resides in the cytoplasm. Its subcellular location is the cytosol. This Humulus lupulus (European hop) protein is Probable CoA ligase CCL8.